The primary structure comprises 286 residues: Thymidylate synthase (286 aa).

140-141 (RR) contributes to the dUMP binding site. C161 serves as the catalytic Nucleophile. Residues 185-188 (RSND), N196, and 226-228 (HIY) each bind dUMP. D188 is a binding site for (6R)-5,10-methylene-5,6,7,8-tetrahydrofolate. Residue A285 participates in (6R)-5,10-methylene-5,6,7,8-tetrahydrofolate binding.

Belongs to the thymidylate synthase family. Bacterial-type ThyA subfamily. Homodimer.

It is found in the cytoplasm. The catalysed reaction is dUMP + (6R)-5,10-methylene-5,6,7,8-tetrahydrofolate = 7,8-dihydrofolate + dTMP. Its pathway is pyrimidine metabolism; dTTP biosynthesis. Functionally, catalyzes the reductive methylation of 2'-deoxyuridine-5'-monophosphate (dUMP) to 2'-deoxythymidine-5'-monophosphate (dTMP) while utilizing 5,10-methylenetetrahydrofolate (mTHF) as the methyl donor and reductant in the reaction, yielding dihydrofolate (DHF) as a by-product. This enzymatic reaction provides an intracellular de novo source of dTMP, an essential precursor for DNA biosynthesis. The polypeptide is Thymidylate synthase (Streptococcus thermophilus (strain ATCC BAA-250 / LMG 18311)).